We begin with the raw amino-acid sequence, 147 residues long: Hemoglobin subunit beta (147 aa).

Val-2 is subject to N-acetylvaline. Residues 3–147 enclose the Globin domain; it reads HLTGEEKAAV…VANALAHKYH (145 aa). Thr-13 bears the Phosphothreonine mark. The residue at position 45 (Ser-45) is a Phosphoserine. Lys-60 is modified (N6-acetyllysine). Residue His-64 participates in heme b binding. Lys-83 carries the post-translational modification N6-acetyllysine. Heme b is bound at residue His-93. At Cys-94 the chain carries S-nitrosocysteine. Lys-145 is modified (N6-acetyllysine).

Belongs to the globin family. As to quaternary structure, heterotetramer of two alpha chains and two beta chains. As to expression, red blood cells.

Involved in oxygen transport from the lung to the various peripheral tissues. This Ateles belzebuth (White-bellied spider monkey) protein is Hemoglobin subunit beta (HBB).